The primary structure comprises 130 residues: Small ribosomal subunit protein bS16 (130 aa).

The tract at residues 82–130 is disordered; it reads VLPKTERNNPKKAVPGKKAQDRAEEKAAKAAEASEAPADEAPAEEAAAE. Over residues 99-110 the composition is skewed to basic and acidic residues; it reads KAQDRAEEKAAK. The segment covering 118–130 has biased composition (acidic residues); that stretch reads PADEAPAEEAAAE.

This sequence belongs to the bacterial ribosomal protein bS16 family.

The polypeptide is Small ribosomal subunit protein bS16 (Dinoroseobacter shibae (strain DSM 16493 / NCIMB 14021 / DFL 12)).